The sequence spans 119 residues: Large ribosomal subunit protein uL22 (119 aa).

The protein belongs to the universal ribosomal protein uL22 family. Part of the 50S ribosomal subunit.

Its function is as follows. This protein binds specifically to 23S rRNA; its binding is stimulated by other ribosomal proteins, e.g. L4, L17, and L20. It is important during the early stages of 50S assembly. It makes multiple contacts with different domains of the 23S rRNA in the assembled 50S subunit and ribosome. The globular domain of the protein is located near the polypeptide exit tunnel on the outside of the subunit, while an extended beta-hairpin is found that lines the wall of the exit tunnel in the center of the 70S ribosome. The chain is Large ribosomal subunit protein uL22 from Chlorobium phaeobacteroides (strain DSM 266 / SMG 266 / 2430).